A 537-amino-acid polypeptide reads, in one-letter code: Tegument protein BRRF2 (537 aa).

4 disordered regions span residues 321-366 (RPRF…AVPP), 378-398 (AKQNRGGMGSLHLAKPEETSP), 414-466 (SKQH…DEEF), and 486-537 (GLRV…LSVV). Residues 334-347 (EPQQTCSQLTSRGN) show a composition bias toward polar residues. Residues 423-441 (SSQAAPSFSSVAPVASLSG) are compositionally biased toward low complexity. Over residues 492–517 (DEDEDGSEDGEFSDLDLSDSDHEGDE) the composition is skewed to acidic residues.

It belongs to the lymphocryptovirus BRRF2 family.

Its subcellular location is the virion tegument. This is Tegument protein BRRF2 from Homo sapiens (Human).